Consider the following 242-residue polypeptide: 6-phosphogluconolactonase (242 aa).

This sequence belongs to the glucosamine/galactosamine-6-phosphate isomerase family. 6-phosphogluconolactonase subfamily.

The catalysed reaction is 6-phospho-D-glucono-1,5-lactone + H2O = 6-phospho-D-gluconate + H(+). It functions in the pathway carbohydrate degradation; pentose phosphate pathway; D-ribulose 5-phosphate from D-glucose 6-phosphate (oxidative stage): step 2/3. In terms of biological role, hydrolysis of 6-phosphogluconolactone to 6-phosphogluconate. This is 6-phosphogluconolactonase (pgl) from Pseudomonas putida (Arthrobacter siderocapsulatus).